The chain runs to 317 residues: Probable cell division protein WhiA (317 aa).

Residues Ser-281–Lys-314 constitute a DNA-binding region (H-T-H motif).

It belongs to the WhiA family.

In terms of biological role, involved in cell division and chromosome segregation. This chain is Probable cell division protein WhiA, found in Clostridium novyi (strain NT).